Here is a 65-residue protein sequence, read N- to C-terminus: Conotoxin VnMLCL-041 (65 aa).

An N-terminal signal peptide occupies residues 1–19; sequence MLCLPVFIILLLLASPAAP. A propeptide spanning residues 20–43 is cleaved from the precursor; the sequence is NPLQTRIQSNLIRAGPEDANIKTD. A Lysine amide modification is found at Lys64.

The protein belongs to the conotoxin T superfamily. Expressed by the venom duct.

Its subcellular location is the secreted. The sequence is that of Conotoxin VnMLCL-041 from Conus ventricosus (Mediterranean cone).